A 560-amino-acid chain; its full sequence is Cytosolic purine 5'-nucleotidase (560 aa).

Asp-52 serves as the catalytic Nucleophile. IMP contacts are provided by Asp-52 and Asp-54. Asp-52 and Asp-54 together coordinate Mg(2+). Residue Asp-54 is the Proton donor of the active site. ATP is bound by residues Arg-144 and Asn-154. IMP-binding residues include Arg-202, Asp-206, Lys-215, Thr-249, Asn-250, Ser-251, and Lys-292. Asp-351 contributes to the Mg(2+) binding site. Ser-418 carries the post-translational modification Phosphoserine. ATP contacts are provided by Gln-453 and Arg-456. Residues Ser-502, Ser-511, and Ser-527 each carry the phosphoserine modification. The disordered stretch occupies residues 541–560; sequence PQEITHCHDEDDDEEEEEEE. Positions 548–560 are required for tetramer assembly; that stretch reads HDEDDDEEEEEEE. Positions 550 to 560 are enriched in acidic residues; sequence EDDDEEEEEEE.

It belongs to the 5'(3')-deoxyribonucleotidase family. In terms of assembly, homotetramer. Mg(2+) is required as a cofactor.

It is found in the cytoplasm. The protein resides in the cytosol. It carries out the reaction a ribonucleoside 5'-phosphate + H2O = a ribonucleoside + phosphate. The enzyme catalyses a 2'-deoxyribonucleoside + a ribonucleoside 5'-phosphate = a ribonucleoside + a 2'-deoxyribonucleoside 5'-phosphate. It catalyses the reaction IMP + H2O = inosine + phosphate. The catalysed reaction is GMP + H2O = guanosine + phosphate. It carries out the reaction dIMP + H2O = 2'-deoxyinosine + phosphate. The enzyme catalyses dGMP + H2O = 2'-deoxyguanosine + phosphate. It catalyses the reaction XMP + H2O = xanthosine + phosphate. The catalysed reaction is inosine + GMP = guanosine + IMP. It carries out the reaction dGMP + inosine = 2'-deoxyguanosine + IMP. The enzyme catalyses dIMP + inosine = 2'-deoxyinosine + IMP. It catalyses the reaction inosine + UMP = uridine + IMP. The catalysed reaction is inosine + CMP = cytidine + IMP. It carries out the reaction inosine + AMP = IMP + adenosine. Its activity is regulated as follows. Allosterically activated by various compounds including ATP, 2,3-BPG/2,3-Bisphosphoglyceric acid and Ap4A/P1,P4-bis(5'-adenosyl) tetraphosphate. Binding of an allosteric activator is a prerequisiste to magnesium and substrate binding. Inhibited by inorganic phosphate. Functionally, broad specificity cytosolic 5'-nucleotidase that catalyzes the dephosphorylation of 6-hydroxypurine nucleoside 5'-monophosphates. In addition, possesses a phosphotransferase activity by which it can transfer a phosphate from a donor nucleoside monophosphate to an acceptor nucleoside, preferably inosine, deoxyinosine and guanosine. Has the highest activities for IMP and GMP followed by dIMP, dGMP and XMP. Could also catalyze the transfer of phosphates from pyrimidine monophosphates but with lower efficiency. Through these activities regulates the purine nucleoside/nucleotide pools within the cell. This Rattus norvegicus (Rat) protein is Cytosolic purine 5'-nucleotidase.